The sequence spans 547 residues: Chaperonin GroEL 2 (547 aa).

ATP contacts are provided by residues 30-33 (TLGP), K51, 87-91 (DGTTT), G415, 479-481 (NAA), and D495. Residues 526 to 547 (KEESAAPAGGGMGGMGGMGGMM) are disordered. Over residues 533-547 (AGGGMGGMGGMGGMM) the composition is skewed to gly residues.

The protein belongs to the chaperonin (HSP60) family. Forms a cylinder of 14 subunits composed of two heptameric rings stacked back-to-back. Interacts with the co-chaperonin GroES.

The protein localises to the cytoplasm. The catalysed reaction is ATP + H2O + a folded polypeptide = ADP + phosphate + an unfolded polypeptide.. Together with its co-chaperonin GroES, plays an essential role in assisting protein folding. The GroEL-GroES system forms a nano-cage that allows encapsulation of the non-native substrate proteins and provides a physical environment optimized to promote and accelerate protein folding. The protein is Chaperonin GroEL 2 of Anaeromyxobacter sp. (strain Fw109-5).